The primary structure comprises 449 residues: Phosphoglucosamine mutase (449 aa).

S101 functions as the Phosphoserine intermediate in the catalytic mechanism. Residues S101, D242, D244, and D246 each coordinate Mg(2+). S101 carries the post-translational modification Phosphoserine.

It belongs to the phosphohexose mutase family. Requires Mg(2+) as cofactor. Post-translationally, activated by phosphorylation.

The enzyme catalyses alpha-D-glucosamine 1-phosphate = D-glucosamine 6-phosphate. In terms of biological role, catalyzes the conversion of glucosamine-6-phosphate to glucosamine-1-phosphate. This Bradyrhizobium sp. (strain ORS 278) protein is Phosphoglucosamine mutase.